Reading from the N-terminus, the 352-residue chain is Transcription factor BHLH156 (352 aa).

Residues 59-141 form a disordered region; sequence GGDDDDNGGV…RSKTIVSERK (83 aa). The interval 130-143 is basic motif; the sequence is RDRSKTIVSERKRR. A bHLH domain is found at 130–179; the sequence is RDRSKTIVSERKRRVRMKEKLYELRALVPNITKMDKASIIADAVVYVKDL. The tract at residues 144–179 is helix-loop-helix motif; the sequence is VRMKEKLYELRALVPNITKMDKASIIADAVVYVKDL. Residues 194–216 form a disordered region; sequence EEARPIRPPPPSAAAQRPQRQPR. The segment covering 206–216 has biased composition (low complexity); sequence AAAQRPQRQPR.

The protein belongs to the bHLH protein family. Forms homodimers. Interacts with IRO2 in the nucleus. Expressed in the meristematic zone of lateral and primary roots.

Its subcellular location is the nucleus. Its function is as follows. Transcription factor involved in positive regulation of genes involved in strategy II iron acquisition, including genes for mugineic acid (MA) family phytosiderophores biosynthesis, and genes involved in S-adenosylmethionine cycle and iron transport. May play a role in the regulation of iron deficiency response by promoting the nuclear localization of IRO2. Possesses transactivation activity in yeast. The protein is Transcription factor BHLH156 of Oryza sativa subsp. japonica (Rice).